Reading from the N-terminus, the 460-residue chain is Phosphomethylpyrimidine synthase (460 aa).

Substrate contacts are provided by residues Asn-80, Met-109, Tyr-139, His-175, 195–197, 236–239, and Glu-275; these read SRG and DSLR. A Zn(2+)-binding site is contributed by His-279. Tyr-302 is a binding site for substrate. His-343 lines the Zn(2+) pocket. Positions 423, 426, and 431 each coordinate [4Fe-4S] cluster.

The protein belongs to the ThiC family. Requires [4Fe-4S] cluster as cofactor.

The catalysed reaction is 5-amino-1-(5-phospho-beta-D-ribosyl)imidazole + S-adenosyl-L-methionine = 4-amino-2-methyl-5-(phosphooxymethyl)pyrimidine + CO + 5'-deoxyadenosine + formate + L-methionine + 3 H(+). It participates in cofactor biosynthesis; thiamine diphosphate biosynthesis. Catalyzes the synthesis of the hydroxymethylpyrimidine phosphate (HMP-P) moiety of thiamine from aminoimidazole ribotide (AIR) in a radical S-adenosyl-L-methionine (SAM)-dependent reaction. This Rippkaea orientalis (strain PCC 8801 / RF-1) (Cyanothece sp. (strain PCC 8801)) protein is Phosphomethylpyrimidine synthase.